The sequence spans 455 residues: MALWGGRFQGETSALFKLFNDSLPVDYRLFEQDVVGSIAWADAIASVGIITATECSDLKKALNELLVEVKGDPAIILASGAEDIHSFVESALIAKVGDLGKKLHTGRSRNDQVATDLKLWCQSEGAALVARLQTLRSELIALAEREFDAVMPGYTHLQRAQPVTFGHWCLAYVEMIERDFSRLTDALKRANTCPLGSGALAGTAYQMDRHALALALNFASPTLNSLDSVSDRDHVVELCSTASISMMHLSRMAEDLIFFNTGEAGFISLSDEVTSGSSLMPQKKNPDALELIRGKTGRVYGSLVGILTTMKALPLAYNKDMQEDKEGLFDVVDSWAICLDMAALVLSGLVVNRPNALLAAQQGYANATELADYLVSKGMPFREAHHVVGVAVVAAIAKKIPLEGFTLAEFKTFADIIEDDVYPNLTIEACLAKRDVLGGTALTQVKQAIAAKKAG.

This sequence belongs to the lyase 1 family. Argininosuccinate lyase subfamily.

The protein resides in the cytoplasm. The catalysed reaction is 2-(N(omega)-L-arginino)succinate = fumarate + L-arginine. The protein operates within amino-acid biosynthesis; L-arginine biosynthesis; L-arginine from L-ornithine and carbamoyl phosphate: step 3/3. This is Argininosuccinate lyase from Shewanella oneidensis (strain ATCC 700550 / JCM 31522 / CIP 106686 / LMG 19005 / NCIMB 14063 / MR-1).